Here is a 269-residue protein sequence, read N- to C-terminus: GTP cyclohydrolase FolE2 (269 aa).

Belongs to the GTP cyclohydrolase IV family.

The enzyme catalyses GTP + H2O = 7,8-dihydroneopterin 3'-triphosphate + formate + H(+). The protein operates within cofactor biosynthesis; 7,8-dihydroneopterin triphosphate biosynthesis; 7,8-dihydroneopterin triphosphate from GTP: step 1/1. Functionally, converts GTP to 7,8-dihydroneopterin triphosphate. The protein is GTP cyclohydrolase FolE2 of Thiobacillus denitrificans (strain ATCC 25259 / T1).